The following is a 296-amino-acid chain: 4-hydroxy-tetrahydrodipicolinate synthase (296 aa).

Residue Thr49 coordinates pyruvate. Residue Tyr137 is the Proton donor/acceptor of the active site. The active-site Schiff-base intermediate with substrate is the Lys165. Ile207 lines the pyruvate pocket.

The protein belongs to the DapA family. Homotetramer; dimer of dimers.

The protein localises to the cytoplasm. It carries out the reaction L-aspartate 4-semialdehyde + pyruvate = (2S,4S)-4-hydroxy-2,3,4,5-tetrahydrodipicolinate + H2O + H(+). The protein operates within amino-acid biosynthesis; L-lysine biosynthesis via DAP pathway; (S)-tetrahydrodipicolinate from L-aspartate: step 3/4. Functionally, catalyzes the condensation of (S)-aspartate-beta-semialdehyde [(S)-ASA] and pyruvate to 4-hydroxy-tetrahydrodipicolinate (HTPA). This Rhodopseudomonas palustris (strain BisA53) protein is 4-hydroxy-tetrahydrodipicolinate synthase.